Reading from the N-terminus, the 172-residue chain is Shikimate kinase (172 aa).

Residue 11 to 16 (ASGKTE) coordinates ATP. Residue T15 coordinates Mg(2+). Substrate contacts are provided by D33, R57, and G80. R120 provides a ligand contact to ATP. R142 is a binding site for substrate.

This sequence belongs to the shikimate kinase family. In terms of assembly, monomer. It depends on Mg(2+) as a cofactor.

It is found in the cytoplasm. The enzyme catalyses shikimate + ATP = 3-phosphoshikimate + ADP + H(+). The protein operates within metabolic intermediate biosynthesis; chorismate biosynthesis; chorismate from D-erythrose 4-phosphate and phosphoenolpyruvate: step 5/7. Its function is as follows. Catalyzes the specific phosphorylation of the 3-hydroxyl group of shikimic acid using ATP as a cosubstrate. In Flavobacterium psychrophilum (strain ATCC 49511 / DSM 21280 / CIP 103535 / JIP02/86), this protein is Shikimate kinase.